The primary structure comprises 488 residues: H2.0-like homeobox protein (488 aa).

Disordered stretches follow at residues 118–173 (AYHH…SSKD) and 331–488 (WRHS…LGCL). Composition is skewed to low complexity over residues 125–135 (QQQQQQQQPQQ) and 158–171 (PNPH…APSS). The homeobox DNA-binding region spans 276–335 (RSWSRAVFSNLQRKGLEKRFEIQKYVTKPDRKQLAAMLGLTDAQVKVWFQNRRMKWRHSK). Basic and acidic residues-rich tracts occupy residues 334-349 (SKEA…EAGE) and 363-372 (DERSPSRSEG). Residues 373-383 (EAESESSDSES) show a composition bias toward acidic residues. A compositionally biased stretch (basic and acidic residues) spans 390–401 (DTERTEGSERSL). A compositionally biased stretch (gly residues) spans 422–432 (GSGGSSGGGGN). The span at 433-454 (SFSFSSASSLSSSSTSAGCASS) shows a compositional bias: low complexity.

This sequence belongs to the H2.0 homeobox family. As to expression, low level in normal B and T-cells, high level in activated lymphocytes and monocytes. Also found in thymus, tonsil, bone marrow, developing vessels, and fetal brain.

Its subcellular location is the nucleus. Transcription factor required for TBX21/T-bet-dependent maturation of Th1 cells as well as maintenance of Th1-specific gene expression. Involved in embryogenesis and hematopoiesis. The polypeptide is H2.0-like homeobox protein (HLX) (Homo sapiens (Human)).